The sequence spans 202 residues: FMN-dependent NADH:quinone oxidoreductase (202 aa).

Residues Ser-9, 15 to 17 (SAS), and 94 to 97 (MYNL) contribute to the FMN site.

Belongs to the azoreductase type 1 family. In terms of assembly, homodimer. FMN serves as cofactor.

The enzyme catalyses 2 a quinone + NADH + H(+) = 2 a 1,4-benzosemiquinone + NAD(+). It carries out the reaction N,N-dimethyl-1,4-phenylenediamine + anthranilate + 2 NAD(+) = 2-(4-dimethylaminophenyl)diazenylbenzoate + 2 NADH + 2 H(+). Functionally, quinone reductase that provides resistance to thiol-specific stress caused by electrophilic quinones. Also exhibits azoreductase activity. Catalyzes the reductive cleavage of the azo bond in aromatic azo compounds to the corresponding amines. In Gluconobacter oxydans (strain 621H) (Gluconobacter suboxydans), this protein is FMN-dependent NADH:quinone oxidoreductase.